The following is a 1287-amino-acid chain: DENN domain-containing protein 5A (1287 aa).

The uDENN domain occupies 57–259 (STTEGENFEQ…EVPLPPPGRS (203 aa)). A Phosphoserine modification is found at S193. The cDENN domain occupies 278 to 414 (ELPLFDFPVK…LEFVQEVSEI (137 aa)). Residues 416–598 (MAFGVPPEGN…IMCHDDDDKD (183 aa)) enclose the dDENN domain. In terms of domain architecture, RUN 1 spans 787-950 (VEENTLIASL…DYFCFTNVFT (164 aa)). Residues 954-1062 (IPYHILIVPS…DDGSLERVLV (109 aa)) enclose the PLAT domain. T1079 carries the post-translational modification Phosphothreonine. Phosphoserine is present on residues S1085, S1087, and S1096. Positions 1134–1280 (TLLLCGECGL…QEFNITLDTS (147 aa)) constitute an RUN 2 domain.

Belongs to the RAB6IP1 family. In terms of assembly, interacts with RAB6A bound to GTP.

The protein resides in the golgi apparatus membrane. Functionally, guanine nucleotide exchange factor (GEF) which may activate RAB6A and RAB39A and/or RAB39B. Promotes the exchange of GDP to GTP, converting inactive GDP-bound Rab proteins into their active GTP-bound form. Involved in the negative regulation of neurite outgrowth. The sequence is that of DENN domain-containing protein 5A (Dennd5a) from Mus musculus (Mouse).